The following is a 348-amino-acid chain: Nicotinate-nucleotide--dimethylbenzimidazole phosphoribosyltransferase (348 aa).

E316 serves as the catalytic Proton acceptor.

It belongs to the CobT family.

It carries out the reaction 5,6-dimethylbenzimidazole + nicotinate beta-D-ribonucleotide = alpha-ribazole 5'-phosphate + nicotinate + H(+). It participates in nucleoside biosynthesis; alpha-ribazole biosynthesis; alpha-ribazole from 5,6-dimethylbenzimidazole: step 1/2. Catalyzes the synthesis of alpha-ribazole-5'-phosphate from nicotinate mononucleotide (NAMN) and 5,6-dimethylbenzimidazole (DMB). The polypeptide is Nicotinate-nucleotide--dimethylbenzimidazole phosphoribosyltransferase (Xanthomonas euvesicatoria pv. vesicatoria (strain 85-10) (Xanthomonas campestris pv. vesicatoria)).